The primary structure comprises 367 residues: MSGSSFGSIFKIATWGESHGKGIGVVVDGCPAGLTLNEEMIQTFLNRRKPGQTKYSTPRKEDDLVTILSGVFEGKTTGTPISMMIANETARSADYSEIASFYRPGHADYTFDAKYGFRDYRGGGRSSGRETIGRVAAGAIAAALLKELGIEVFTYTKSIGPIQIDYHKCQKENLTLSPLCMPDLEASQKAEDYLEQCIHNLDSSGGMIECIISGVPAGIGEPVFDKLDAQLAKAIFSIGAVKGFEIGSGFEVAKQLGSENNDGFAFDANGKLIKLTNHSGGILGGISDGSEIIFRAAIKPTPSIKKEQQTVNKSGENINVSIKGRHDPIIVPRAVVVVEAMAALTLADLLLSGMSSKMDYVKKIYQK.

An NADP(+)-binding site is contributed by R48. Residues 125–127 (RSS), G284, 299–303 (KPTPS), and R325 each bind FMN.

The protein belongs to the chorismate synthase family. Homotetramer. FMNH2 is required as a cofactor.

It catalyses the reaction 5-O-(1-carboxyvinyl)-3-phosphoshikimate = chorismate + phosphate. Its pathway is metabolic intermediate biosynthesis; chorismate biosynthesis; chorismate from D-erythrose 4-phosphate and phosphoenolpyruvate: step 7/7. In terms of biological role, catalyzes the anti-1,4-elimination of the C-3 phosphate and the C-6 proR hydrogen from 5-enolpyruvylshikimate-3-phosphate (EPSP) to yield chorismate, which is the branch point compound that serves as the starting substrate for the three terminal pathways of aromatic amino acid biosynthesis. This reaction introduces a second double bond into the aromatic ring system. In Lachnoclostridium phytofermentans (strain ATCC 700394 / DSM 18823 / ISDg) (Clostridium phytofermentans), this protein is Chorismate synthase.